Here is a 275-residue protein sequence, read N- to C-terminus: 2,3,4,5-tetrahydropyridine-2,6-dicarboxylate N-succinyltransferase (275 aa).

R106 and D143 together coordinate substrate.

It belongs to the transferase hexapeptide repeat family. As to quaternary structure, homotrimer.

Its subcellular location is the cytoplasm. It carries out the reaction (S)-2,3,4,5-tetrahydrodipicolinate + succinyl-CoA + H2O = (S)-2-succinylamino-6-oxoheptanedioate + CoA. The protein operates within amino-acid biosynthesis; L-lysine biosynthesis via DAP pathway; LL-2,6-diaminopimelate from (S)-tetrahydrodipicolinate (succinylase route): step 1/3. The polypeptide is 2,3,4,5-tetrahydropyridine-2,6-dicarboxylate N-succinyltransferase (Paraburkholderia xenovorans (strain LB400)).